The following is a 271-amino-acid chain: Extracellular metalloprotease ARB_05317 (271 aa).

Residues 1-19 form the signal peptide; that stretch reads MRFSVLLTGLAAAGSIATA. An N-linked (GlcNAc...) asparagine glycan is attached at asparagine 136. Histidine 185 contributes to the Zn(2+) binding site. Glutamate 186 is an active-site residue. Histidine 189 provides a ligand contact to Zn(2+). Residue asparagine 200 is glycosylated (N-linked (GlcNAc...) asparagine). Cysteine 222 and cysteine 248 are oxidised to a cystine.

The protein belongs to the peptidase M43B family.

The protein resides in the secreted. Secreted metalloproteinase that allows assimilation of proteinaceous substrates. Plays a pivotal role as a pathogenicity determinant during infections and contributes to the ability of the pathogen to persist within the mammalian host. This Arthroderma benhamiae (strain ATCC MYA-4681 / CBS 112371) (Trichophyton mentagrophytes) protein is Extracellular metalloprotease ARB_05317.